Here is a 486-residue protein sequence, read N- to C-terminus: MLEKEFFTEYGEASQYQIQEVVGKGSYGVVASAECPHTGGKVAIKKMTNVFEHVSDAIRILREIKLLRLLRHPDIVEIKHIMLPPCRKEFKDIYVVFELMESDLHHVLKVNDDLTPQHHQFFLYQLLRGLKFMHSAHVFHRDLKPKNILANADCKIKICDLGLARVSFTDSPSAVFWTDYVATRWYRAPELCGSFYSNYTPAIDMWSVGCIFAEMLTGKPLFPGKNVVHQLELVTDLLGTPSPITLSRIRNEKARKYLGNMRRKDPVPFTHKFPNIDPVALKLLQRLIAFDPKDRPSAEEALADPYFQGLANVDYEPSRQPISKLEFEFERRKLTRDDVRELMYREILEYHPQMLQEYLQGEENINSHFLYPSGVDQFKQEFARLEEHNDDEEEHNSPPHQRKYTSLPRERVCSSEDEGSDSVHAQSSSASVVFTPPQTPNTATGLSSQKASQVDKAATPVKRSACLMRSDSICASRCVGVSSAVS.

The Protein kinase domain occupies 16-307 (YQIQEVVGKG…AEEALADPYF (292 aa)). ATP is bound by residues 22-30 (VGKGSYGVV) and lysine 45. Aspartate 142 functions as the Proton acceptor in the catalytic mechanism. At threonine 178 the chain carries Phosphothreonine. Residues 178 to 180 (TDY) carry the TXY motif. A Phosphotyrosine modification is found at tyrosine 180. Position 183 is a phosphothreonine (threonine 183). A disordered region spans residues 386 to 455 (EEHNDDEEEH…LSSQKASQVD (70 aa)). Over residues 422–433 (SVHAQSSSASVV) the composition is skewed to low complexity. A compositionally biased stretch (polar residues) spans 440–452 (PNTATGLSSQKAS).

It belongs to the protein kinase superfamily. CMGC Ser/Thr protein kinase family. MAP kinase subfamily. Dually phosphorylated on Thr-178 and Tyr-180, which activates the enzyme.

The enzyme catalyses L-seryl-[protein] + ATP = O-phospho-L-seryl-[protein] + ADP + H(+). It catalyses the reaction L-threonyl-[protein] + ATP = O-phospho-L-threonyl-[protein] + ADP + H(+). Its activity is regulated as follows. Activated by threonine and tyrosine phosphorylation. This Arabidopsis thaliana (Mouse-ear cress) protein is Mitogen-activated protein kinase 17 (MPK17).